Consider the following 249-residue polypeptide: MHLGHEEFQRTDGRASTGPADAGPAGAGRAPRIGVGGPVGSGKTALVAALCRALSSSLRIGVVTNDIYTTEDADFLRRAGVLDPERIRAVETGCCPHTAIRDDITANLDMVEDLEADTGPLDLVLVESGGDNLTATFSYGLIDRQIFVVDVAGGDKVPRKGGPGVTGSDLLVINKTDLAPLVGADLDVMARDATAARGARPVVFTSLTADPTAADVTAWVRAQLAELSPRGGSYDASDASNASQPLNRM.

A compositionally biased stretch (basic and acidic residues) spans 1–13 (MHLGHEEFQRTDG). Residues 1 to 34 (MHLGHEEFQRTDGRASTGPADAGPAGAGRAPRIG) are disordered. A compositionally biased stretch (low complexity) spans 18–33 (GPADAGPAGAGRAPRI). 37–44 (GPVGSGKT) is a binding site for GTP. The interval 229–249 (PRGGSYDASDASNASQPLNRM) is disordered. The span at 238–249 (DASNASQPLNRM) shows a compositional bias: polar residues.

The protein belongs to the SIMIBI class G3E GTPase family. UreG subfamily. Homodimer. UreD, UreF and UreG form a complex that acts as a GTP-hydrolysis-dependent molecular chaperone, activating the urease apoprotein by helping to assemble the nickel containing metallocenter of UreC. The UreE protein probably delivers the nickel.

The protein resides in the cytoplasm. Facilitates the functional incorporation of the urease nickel metallocenter. This process requires GTP hydrolysis, probably effectuated by UreG. This is Urease accessory protein UreG from Frankia casuarinae (strain DSM 45818 / CECT 9043 / HFP020203 / CcI3).